The following is a 315-amino-acid chain: Calcium homeostasis modulator protein 6 (315 aa).

Residues 1–21 are Cytoplasmic-facing; that stretch reads MEKFKAVLDLQIKHRSALGYG. The chain crosses the membrane as a helical span at residues 22 to 37; sequence LVTLLTAGGEKIFSTV. Residues 38–46 are Extracellular-facing; that stretch reads VFQCPCTAT. 3 cysteine pairs are disulfide-bonded: Cys41–Cys127, Cys43–Cys156, and Cys140–Cys147. Residues 47–68 traverse the membrane as a helical segment; sequence LNLTYGLVFLLVPALALFLLGY. At 69 to 103 the chain is on the cytoplasmic side; it reads ALSARTWRLLTGCCSRSASTRSSSGLRSTLVCAQV. A helical membrane pass occupies residues 104 to 128; it reads SAVAALAPLTWVAVALLGGSFYQCA. Residues 129 to 169 lie on the Extracellular side of the membrane; that stretch reads VSGSTRLASYLCKDRNHSCIAKLPQVPCNKQEAEMQEILSQ. The chain crosses the membrane as a helical span at residues 170–192; it reads LKAQSQVLGWVLIAAVIFLLLVF. The Cytoplasmic segment spans residues 193–315; that stretch reads KCVSRCFSPV…DAAMANTHGV (123 aa).

Belongs to the CALHM family. In terms of assembly, oligomerizes to form decameric and undecameric channels.

The protein localises to the cell membrane. The enzyme catalyses ATP(in) = ATP(out). Functionally, pore-forming subunit of an ATP-permeable channel. In response to pathogen-derived and proinflammatory stimuli, relocates from intracellular compartments to NK-dendritic cell and NK-macrophage immune synapses where it mediates ATP efflux and NK cell activation involved in antimicrobial and antitumor responses. May assemble to form gap junction channel-like structures with gating and ion conductance likely regulated by membrane lipids and voltage rather than by extracellular calcium levels. The sequence is that of Calcium homeostasis modulator protein 6 from Rattus norvegicus (Rat).